Reading from the N-terminus, the 117-residue chain is Immunoglobulin heavy variable 1-69D (117 aa).

An N-terminal signal peptide occupies residues 1–19 (MDWTWRFLFVVAAATGVQS). Glutamine 20 bears the Pyrrolidone carboxylic acid mark. The framework-1 stretch occupies residues 20 to 44 (QVQLVQSGAEVKKPGSSVKVSCKAS). Positions 20-117 (QVQLVQSGAE…EDTAVYYCAR (98 aa)) constitute an Ig-like domain. Cysteine 41 and cysteine 115 are oxidised to a cystine. Residues 45–52 (GGTFSSYA) form a complementarity-determining-1 region. The interval 53–69 (ISWVRQAPGQGLEWMGG) is framework-2. Residues 70-77 (IIPIFGTA) form a complementarity-determining-2 region. Residues 78 to 115 (NYAQKFQGRVTITADESTSTAYMELSSLRSEDTAVYYC) are framework-3. The interval 116–117 (AR) is complementarity-determining-3.

In terms of assembly, immunoglobulins are composed of two identical heavy chains and two identical light chains; disulfide-linked.

It localises to the secreted. The protein resides in the cell membrane. Functionally, v region of the variable domain of immunoglobulin heavy chains that participates in the antigen recognition. Immunoglobulins, also known as antibodies, are membrane-bound or secreted glycoproteins produced by B lymphocytes. In the recognition phase of humoral immunity, the membrane-bound immunoglobulins serve as receptors which, upon binding of a specific antigen, trigger the clonal expansion and differentiation of B lymphocytes into immunoglobulins-secreting plasma cells. Secreted immunoglobulins mediate the effector phase of humoral immunity, which results in the elimination of bound antigens. The antigen binding site is formed by the variable domain of one heavy chain, together with that of its associated light chain. Thus, each immunoglobulin has two antigen binding sites with remarkable affinity for a particular antigen. The variable domains are assembled by a process called V-(D)-J rearrangement and can then be subjected to somatic hypermutations which, after exposure to antigen and selection, allow affinity maturation for a particular antigen. The sequence is that of Immunoglobulin heavy variable 1-69D from Homo sapiens (Human).